Here is a 331-residue protein sequence, read N- to C-terminus: Phenylalanine--tRNA ligase alpha subunit (331 aa).

Glu252 lines the Mg(2+) pocket.

Belongs to the class-II aminoacyl-tRNA synthetase family. Phe-tRNA synthetase alpha subunit type 1 subfamily. In terms of assembly, tetramer of two alpha and two beta subunits. Mg(2+) serves as cofactor.

Its subcellular location is the cytoplasm. It catalyses the reaction tRNA(Phe) + L-phenylalanine + ATP = L-phenylalanyl-tRNA(Phe) + AMP + diphosphate + H(+). The protein is Phenylalanine--tRNA ligase alpha subunit of Xanthomonas oryzae pv. oryzae (strain MAFF 311018).